Here is a 488-residue protein sequence, read N- to C-terminus: Ribulose bisphosphate carboxylase large chain (488 aa).

Substrate contacts are provided by Asn127 and Thr177. Lys179 (proton acceptor) is an active-site residue. Position 181 (Lys181) interacts with substrate. The Mg(2+) site is built by Lys205, Asp207, and Glu208. Lys205 is subject to N6-carboxylysine. His297 (proton acceptor) is an active-site residue. Substrate-binding residues include Arg298, His330, and Ser382.

The protein belongs to the RuBisCO large chain family. Type I subfamily. Heterohexadecamer of 8 large chains and 8 small chains. It depends on Mg(2+) as a cofactor.

It localises to the plastid. It is found in the chloroplast. The catalysed reaction is 2 (2R)-3-phosphoglycerate + 2 H(+) = D-ribulose 1,5-bisphosphate + CO2 + H2O. It carries out the reaction D-ribulose 1,5-bisphosphate + O2 = 2-phosphoglycolate + (2R)-3-phosphoglycerate + 2 H(+). Functionally, ruBisCO catalyzes two reactions: the carboxylation of D-ribulose 1,5-bisphosphate, the primary event in carbon dioxide fixation, as well as the oxidative fragmentation of the pentose substrate in the photorespiration process. Both reactions occur simultaneously and in competition at the same active site. The polypeptide is Ribulose bisphosphate carboxylase large chain (Olisthodiscus luteus (Marine phytoflagellate)).